The chain runs to 542 residues: CTP synthase (542 aa).

The amidoligase domain stretch occupies residues 1–264 (MKFIFITGGV…AKLIINKLKL (264 aa)). S12 is a CTP binding site. S12 serves as a coordination point for UTP. Position 13-18 (13-18 (SLGKGI)) interacts with ATP. Y53 serves as a coordination point for L-glutamine. ATP is bound at residue D70. 2 residues coordinate Mg(2+): D70 and E138. CTP contacts are provided by residues 145 to 147 (DIE), 185 to 190 (KTKPTQ), and K221. Residues 185-190 (KTKPTQ) and K221 each bind UTP. Residue 237–239 (KDA) coordinates ATP. In terms of domain architecture, Glutamine amidotransferase type-1 spans 298–541 (YIMLKDAYTS…VKSALDKKLK (244 aa)). Residue G359 coordinates L-glutamine. C386 functions as the Nucleophile; for glutamine hydrolysis in the catalytic mechanism. L-glutamine is bound by residues 387 to 390 (LGMQ), E410, and R467. Residues H514 and E516 contribute to the active site.

Belongs to the CTP synthase family. Homotetramer.

It carries out the reaction UTP + L-glutamine + ATP + H2O = CTP + L-glutamate + ADP + phosphate + 2 H(+). It catalyses the reaction L-glutamine + H2O = L-glutamate + NH4(+). The enzyme catalyses UTP + NH4(+) + ATP = CTP + ADP + phosphate + 2 H(+). It functions in the pathway pyrimidine metabolism; CTP biosynthesis via de novo pathway; CTP from UDP: step 2/2. Its activity is regulated as follows. Allosterically activated by GTP, when glutamine is the substrate; GTP has no effect on the reaction when ammonia is the substrate. The allosteric effector GTP functions by stabilizing the protein conformation that binds the tetrahedral intermediate(s) formed during glutamine hydrolysis. Inhibited by the product CTP, via allosteric rather than competitive inhibition. Functionally, catalyzes the ATP-dependent amination of UTP to CTP with either L-glutamine or ammonia as the source of nitrogen. Regulates intracellular CTP levels through interactions with the four ribonucleotide triphosphates. The chain is CTP synthase from Methanococcus aeolicus (strain ATCC BAA-1280 / DSM 17508 / OCM 812 / Nankai-3).